A 307-amino-acid chain; its full sequence is tRNA pseudouridine synthase B (307 aa).

Asp48 (nucleophile) is an active-site residue.

The protein belongs to the pseudouridine synthase TruB family. Type 1 subfamily.

The catalysed reaction is uridine(55) in tRNA = pseudouridine(55) in tRNA. In terms of biological role, responsible for synthesis of pseudouridine from uracil-55 in the psi GC loop of transfer RNAs. This chain is tRNA pseudouridine synthase B, found in Pasteurella multocida (strain Pm70).